Consider the following 507-residue polypeptide: RNA-splicing ligase RtcB homolog (507 aa).

D121, C124, H229, H261, and H355 together coordinate Mn(2+). GMP is bound at residue 228-232 (NHYAE). GMP contacts are provided by residues 355-356 (HN), 404-407 (GGTM), S411, 430-433 (HGAG), and K506. H430 acts as the GMP-histidine intermediate in catalysis.

It belongs to the RtcB family. In terms of assembly, catalytic component of the tRNA-splicing ligase complex. Requires Mn(2+) as cofactor.

It carries out the reaction a 3'-end 3'-phospho-ribonucleotide-RNA + a 5'-end dephospho-ribonucleoside-RNA + GTP = a ribonucleotidyl-ribonucleotide-RNA + GMP + diphosphate. The catalysed reaction is a 3'-end 2',3'-cyclophospho-ribonucleotide-RNA + a 5'-end dephospho-ribonucleoside-RNA + GTP + H2O = a ribonucleotidyl-ribonucleotide-RNA + GMP + diphosphate + H(+). Functionally, catalytic subunit of the tRNA-splicing ligase complex that acts by directly joining spliced tRNA halves to mature-sized tRNAs by incorporating the precursor-derived splice junction phosphate into the mature tRNA as a canonical 3',5'-phosphodiester. May act as an RNA ligase with broad substrate specificity, and may function toward other RNAs. The sequence is that of RNA-splicing ligase RtcB homolog from Plasmodium yoelii yoelii.